A 280-amino-acid polypeptide reads, in one-letter code: 2-dehydro-3-deoxyphosphooctonate aldolase (280 aa).

It belongs to the KdsA family.

The protein resides in the cytoplasm. It catalyses the reaction D-arabinose 5-phosphate + phosphoenolpyruvate + H2O = 3-deoxy-alpha-D-manno-2-octulosonate-8-phosphate + phosphate. It participates in carbohydrate biosynthesis; 3-deoxy-D-manno-octulosonate biosynthesis; 3-deoxy-D-manno-octulosonate from D-ribulose 5-phosphate: step 2/3. Its pathway is bacterial outer membrane biogenesis; lipopolysaccharide biosynthesis. The chain is 2-dehydro-3-deoxyphosphooctonate aldolase from Neisseria meningitidis serogroup A / serotype 4A (strain DSM 15465 / Z2491).